The sequence spans 89 residues: Transcription elongation factor 1 homolog (89 aa).

The Zn(2+) site is built by Cys25, Cys28, Cys49, and Cys52.

It belongs to the ELOF1 family.

The protein resides in the nucleus. Its function is as follows. Transcription elongation factor implicated in the maintenance of proper chromatin structure in actively transcribed regions. The chain is Transcription elongation factor 1 homolog from Oryza sativa subsp. japonica (Rice).